Consider the following 201-residue polypeptide: Small ribosomal subunit protein uS4 (201 aa).

The interval 20 to 46 is disordered; sequence SGTGKELSRRPYAPGQHGQDRRGSLSE. The S4 RNA-binding domain maps to 93–156; it reads RRLDNVVYRL…KDLQIVKEAL (64 aa).

The protein belongs to the universal ribosomal protein uS4 family. In terms of assembly, part of the 30S ribosomal subunit. Contacts protein S5. The interaction surface between S4 and S5 is involved in control of translational fidelity.

Functionally, one of the primary rRNA binding proteins, it binds directly to 16S rRNA where it nucleates assembly of the body of the 30S subunit. In terms of biological role, with S5 and S12 plays an important role in translational accuracy. In Ligilactobacillus salivarius (strain UCC118) (Lactobacillus salivarius), this protein is Small ribosomal subunit protein uS4.